Reading from the N-terminus, the 54-residue chain is UPF0391 membrane protein Rfer_1875 (54 aa).

2 helical membrane-spanning segments follow: residues 5–25 (AVVF…GIAA) and 30–50 (IGKI…LFGL).

This sequence belongs to the UPF0391 family.

The protein resides in the cell membrane. In Albidiferax ferrireducens (strain ATCC BAA-621 / DSM 15236 / T118) (Rhodoferax ferrireducens), this protein is UPF0391 membrane protein Rfer_1875.